The primary structure comprises 235 residues: Carbonic anhydrase 1 (235 aa).

Positions 1 to 235 (GNKQSPVDIK…LKGRTVKASF (235 aa)) constitute an Alpha-carbonic anhydrase domain. The active-site Proton donor/acceptor is H40. The Zn(2+) site is built by H69, H71, and H94. Residues T174 and 174–175 (TH) each bind substrate.

Belongs to the alpha-carbonic anhydrase family. Requires Zn(2+) as cofactor.

The protein resides in the cytoplasm. It catalyses the reaction hydrogencarbonate + H(+) = CO2 + H2O. The enzyme catalyses urea = cyanamide + H2O. Its activity is regulated as follows. Inhibited by acetazolamide. Functionally, catalyzes the reversible hydration of carbon dioxide. Can hydrate cyanamide to urea. The chain is Carbonic anhydrase 1 (CA1) from Oryctolagus cuniculus (Rabbit).